Reading from the N-terminus, the 71-residue chain is Disintegrin tzabcanin (71 aa).

The region spanning 1–71 is the Disintegrin domain; the sequence is GEECDCGSPA…ADCPRNHFHA (71 aa). 6 disulfides stabilise this stretch: Cys-4–Cys-19, Cys-6–Cys-14, Cys-13–Cys-36, Cys-27–Cys-33, Cys-32–Cys-57, and Cys-45–Cys-64. Residues 49 to 51 carry the Cell attachment site motif; the sequence is RGD.

Belongs to the venom metalloproteinase (M12B) family. P-II subfamily. P-IIa sub-subfamily. As to expression, expressed by the venom gland.

It is found in the secreted. Functionally, inhibits fibrinogen interaction with platelets. Acts by binding to alpha-IIb/beta-3 (ITGA2B/ITGB3) on the platelet surface and inhibits aggregation induced by ADP, thrombin, platelet-activating factor and collagen. Inhibits cell adhesion to vitronectin, probably by blocking its receptor integrin alpha-V/beta-3 (ITGAV/ITGB3), and to fibronectin in vitro. Shows little to no cytotoxicity in vitro. This Crotalus tzabcan (Yucatan neotropical rattlesnake) protein is Disintegrin tzabcanin.